We begin with the raw amino-acid sequence, 147 residues long: 3-dehydroquinate dehydratase (147 aa).

Catalysis depends on Tyr23, which acts as the Proton acceptor. Residues Asn75, His81, and Asp88 each coordinate substrate. His101 functions as the Proton donor in the catalytic mechanism. Substrate-binding positions include 102–103 (LS) and Arg112.

The protein belongs to the type-II 3-dehydroquinase family. Homododecamer.

The catalysed reaction is 3-dehydroquinate = 3-dehydroshikimate + H2O. It participates in metabolic intermediate biosynthesis; chorismate biosynthesis; chorismate from D-erythrose 4-phosphate and phosphoenolpyruvate: step 3/7. Its function is as follows. Catalyzes a trans-dehydration via an enolate intermediate. The protein is 3-dehydroquinate dehydratase of Thioalkalivibrio sulfidiphilus (strain HL-EbGR7).